Here is a 689-residue protein sequence, read N- to C-terminus: Glycine--tRNA ligase beta subunit (689 aa).

It belongs to the class-II aminoacyl-tRNA synthetase family. Tetramer of two alpha and two beta subunits.

It is found in the cytoplasm. It carries out the reaction tRNA(Gly) + glycine + ATP = glycyl-tRNA(Gly) + AMP + diphosphate. This chain is Glycine--tRNA ligase beta subunit, found in Shewanella woodyi (strain ATCC 51908 / MS32).